We begin with the raw amino-acid sequence, 346 residues long: Phosphoribosylformylglycinamidine cyclo-ligase (346 aa).

Belongs to the AIR synthase family.

It localises to the cytoplasm. The enzyme catalyses 2-formamido-N(1)-(5-O-phospho-beta-D-ribosyl)acetamidine + ATP = 5-amino-1-(5-phospho-beta-D-ribosyl)imidazole + ADP + phosphate + H(+). Its pathway is purine metabolism; IMP biosynthesis via de novo pathway; 5-amino-1-(5-phospho-D-ribosyl)imidazole from N(2)-formyl-N(1)-(5-phospho-D-ribosyl)glycinamide: step 2/2. In Photobacterium profundum (strain SS9), this protein is Phosphoribosylformylglycinamidine cyclo-ligase.